Consider the following 445-residue polypeptide: MTKKYFGTDGIRGRVGEFPITPDFMLKLGWAAGMAFRSMGACRILVGKDTRISGYMFESALEAGLSAAGADVMLLGPMPTPAIAYLTRTFHAEAGIVISASHNPHDDNGIKFFSGQGTKLPDEIELMIEELLDAPMTVVESSKLGKVSRINDASGRYIEFCKSSVPSSTNFAGLKIVVDCAHGATYKVAPSVFKELGADVTVLSAQPNGLNINDNCGSTHMEQLQAAVLAEHADLGIAFDGDGDRVLMVDHTGAIVDGDDLLFIIARDLHERNKLQGGVVGTLMSNLGLELALADLGIPFVRANVGDRYVIAELLERNWQVGGENSGHVVCFQHTTTGDAIIAALQVLLSLRRREESLAQARQALRKCPQVLLNVRFAGGENPIEHPAVKEACERVTLAMAGRGRVLLRKSGTEPLVRVMVEGDDETQVRGHAEDLAKLVTEVCA.

The Phosphoserine intermediate role is filled by Ser-101. Residues Ser-101, Asp-240, Asp-242, and Asp-244 each coordinate Mg(2+). Ser-101 carries the post-translational modification Phosphoserine.

The protein belongs to the phosphohexose mutase family. Mg(2+) is required as a cofactor. In terms of processing, activated by phosphorylation.

It carries out the reaction alpha-D-glucosamine 1-phosphate = D-glucosamine 6-phosphate. In terms of biological role, catalyzes the conversion of glucosamine-6-phosphate to glucosamine-1-phosphate. This chain is Phosphoglucosamine mutase, found in Pseudomonas fluorescens (strain SBW25).